A 273-amino-acid chain; its full sequence is MEPYLSNELFPPPTEAWLQTVSSDPEAQGWGAWGRTEKTSLVPRAGSRAGSDKEAEENEDASFLLSLLEPENLAKSPVFNQELEAIKLKLWAMEHAEAQPEPPCVQRKATEEERAEVRQLLSPETVDCFFSRTSKENVEADHRSVFVGNVDYGGSAAELEAYFSPCGEIHRVTILCDKFSGHPKGYAYIEFASHRSVKAAVGLDESTFRGRVIKVLPKRTNFPGISSTDRGGLRTHSGNRAAFLHGSLHRKARLRAHGRSRGHGGAPQWFSPY.

A disordered region spans residues 22 to 57 (SSDPEAQGWGAWGRTEKTSLVPRAGSRAGSDKEAEE). One can recognise an RRM domain in the interval 143-220 (RSVFVGNVDY…RVIKVLPKRT (78 aa)).

The protein localises to the cytoplasm. Its function is as follows. Binds the poly(A) tail of mRNA. This Mus musculus (Mouse) protein is Embryonic polyadenylate-binding protein 2 (Pabpn1l).